A 276-amino-acid polypeptide reads, in one-letter code: NAD kinase (276 aa).

Asp-67 (proton acceptor) is an active-site residue. Residues 67–68 (DG), Arg-72, 136–137 (ND), Lys-147, Arg-164, Asp-166, 177–182 (TAYALS), Ala-201, and Gln-235 contribute to the NAD(+) site.

It belongs to the NAD kinase family. The cofactor is a divalent metal cation.

It localises to the cytoplasm. The enzyme catalyses NAD(+) + ATP = ADP + NADP(+) + H(+). Functionally, involved in the regulation of the intracellular balance of NAD and NADP, and is a key enzyme in the biosynthesis of NADP. Catalyzes specifically the phosphorylation on 2'-hydroxyl of the adenosine moiety of NAD to yield NADP. This chain is NAD kinase, found in Thermococcus sibiricus (strain DSM 12597 / MM 739).